Here is a 600-residue protein sequence, read N- to C-terminus: Aspartate--tRNA(Asp/Asn) ligase (600 aa).

Glu174 contributes to the L-aspartate binding site. The segment at 198 to 201 is aspartate; the sequence is QLFK. Arg220 is an L-aspartate binding site. ATP-binding positions include 220 to 222 and Gln229; that span reads RDE. His457 lines the L-aspartate pocket. Residue Glu491 coordinates ATP. Arg498 is a binding site for L-aspartate. 543-546 serves as a coordination point for ATP; it reads GLDR.

The protein belongs to the class-II aminoacyl-tRNA synthetase family. Type 1 subfamily. In terms of assembly, homodimer.

The protein localises to the cytoplasm. It carries out the reaction tRNA(Asx) + L-aspartate + ATP = L-aspartyl-tRNA(Asx) + AMP + diphosphate. In terms of biological role, aspartyl-tRNA synthetase with relaxed tRNA specificity since it is able to aspartylate not only its cognate tRNA(Asp) but also tRNA(Asn). Reaction proceeds in two steps: L-aspartate is first activated by ATP to form Asp-AMP and then transferred to the acceptor end of tRNA(Asp/Asn). In Burkholderia cenocepacia (strain ATCC BAA-245 / DSM 16553 / LMG 16656 / NCTC 13227 / J2315 / CF5610) (Burkholderia cepacia (strain J2315)), this protein is Aspartate--tRNA(Asp/Asn) ligase.